The following is a 144-amino-acid chain: uncharacterized protein (144 aa).

Residues Asn-50–Ile-140 enclose the Rhodanese domain.

This is an uncharacterized protein from Buchnera aphidicola subsp. Acyrthosiphon pisum (strain APS) (Acyrthosiphon pisum symbiotic bacterium).